A 586-amino-acid chain; its full sequence is Paxillin (586 aa).

The residue at position 1 (Met-1) is an N-acetylmethionine. The LD motif 1 motif lies at 3 to 15 (DLDALLADLESTT). Residues 13 to 138 (STTSHISKRP…PSPTVMSSSL (126 aa)) form a disordered region. Tyr-31 carries the post-translational modification Phosphotyrosine; by PTK6. The segment covering 45–54 (VPPPVPPPPS) has biased composition (pro residues). Phosphoserine occurs at positions 83 and 85. Residues 86–98 (PIYSSSTKNSSAS) show a composition bias toward low complexity. Tyr-88 is subject to Phosphotyrosine. A Phosphoserine modification is found at Ser-106. Tyr-118 is modified (phosphotyrosine; by PTK6). A phosphoserine mark is found at Ser-119, Ser-126, and Ser-130. Polar residues predominate over residues 121–137 (PNKQKSAEPSPTVMSSS). A Phosphothreonine modification is found at Thr-132. Ser-137, Ser-140, and Ser-143 each carry phosphoserine. The short motif at 144–156 (ELDRLLLELNAVQ) is the LD motif 2 element. The residue at position 210 (Tyr-210) is a Phosphotyrosine. Positions 220–241 (GGKAGPLMKEKPKRNGGRGLED) are disordered. Positions 245-257 (SVESLLDELENSV) match the LD motif 3 motif. Ser-259 bears the Phosphoserine mark. Residues 266-290 (VNQGEMSSPQRVTSSQQQTRISASS) are disordered. Ser-273 bears the Phosphoserine; by CDK5 mark. Phosphoserine occurs at positions 279, 287, 290, 301, 317, 327, and 335. The interval 291 to 310 (ATRELDELMASLSDFKFMAQ) is required for binding to PARVA and ILK. The LD motif 4 signature appears at 294 to 305 (ELDELMASLSDF). The interval 309–329 (AQGKTGSSSPPGGLSKPGSQL) is disordered. The segment covering 310–329 (QGKTGSSSPPGGLSKPGSQL) has biased composition (low complexity). An LD motif 5 motif is present at residues 328–340 (QLDSMLGSLQSDL). LIM zinc-binding domains lie at 353–403 (CGAC…CEKD), 412–462 (CYYC…CRKD), and 471–521 (CGGC…CEVH). Residue Ser-528 is modified to Phosphoserine. The LIM zinc-binding 4 domain maps to 530 to 580 (CSGCQKPITGRCITAMAKKFHPEHFVCAFCLKQLNKGTFKEQNDKPYCQSC).

Belongs to the paxillin family. As to quaternary structure, interacts in vitro with VCL/vinculin as well as to the SH3 domain of SRC and, when tyrosine phosphorylated, to the SH2 domain of CRK. Interacts with GIT1. Interacts with NUDT16L1/SDOS. Interacts with PTK2/FAK1. Interacts with PTK2B/PYK2. Interacts with ASAP2. Interacts with unphosphorylated ITGA4. Interacts with RNF5. Interacts with PDCD10. Interacts with NEK3, the interaction is prolactin-dependent. Interacts with PTK6. Interacts with TGFB1I1. Interacts with SORBS1. Interacts with PARVB. Interacts (via LD motif 4) with PARVA/PARVIN. Interacts (via LD motif 4) with ILK. Interacts (via cytoplasmic domain) with CEACAM1; the interaction is phosphotyrosyl-dependent. Interacts with LIMA1; this complex stabilizes actin dynamics. Interacts with CD36 (via C-terminus). Interacts with TRIM15. Interacts with PAK4; PAK4 acts as a scaffold to suppport PAXI phosphorylation at Ser-301. Phosphorylated by MAPK1/ERK2. Phosphorylated on tyrosine residues during integrin-mediated cell adhesion, embryonic development, fibroblast transformation and following stimulation of cells by mitogens. Phosphorylation at Ser-273 by CDK5 reduces its interaction with PTK2/FAK1 in matrix-cell focal adhesions (MCFA) during oligodendrocytes (OLs) differentiation. Phosphorylation at Tyr-31 and Tyr-118 by PTK6 promote the activation of RAC1 via CRK/CrKII, thereby promoting migration and invasion. Phosphorylation at Ser-279 by SLK is required for PXN redistribution and cell motility. Phosphorylation at Ser-301 promotes focal adhesion disassembly during cell migration.

It localises to the cytoplasm. It is found in the cytoskeleton. The protein resides in the cell junction. The protein localises to the focal adhesion. Its subcellular location is the cell cortex. Cytoskeletal protein involved in actin-membrane attachment at sites of cell adhesion to the extracellular matrix (focal adhesion). Recruits other proteins such as TRIM15 to focal adhesion. In Rattus norvegicus (Rat), this protein is Paxillin.